The sequence spans 769 residues: Apoptotic enhancer 1 protein (769 aa).

Disordered regions lie at residues 69–88 (PVRV…SQQY), 265–396 (SVEP…LDES), and 451–518 (PQLP…RSDD). Low complexity predominate over residues 275-284 (QQQQPSPQMM). Residues 285 to 295 (KSEEFSEKRDL) show a composition bias toward basic and acidic residues. A compositionally biased stretch (low complexity) spans 339 to 353 (STDPHSNHSSPSTSS). Composition is skewed to polar residues over residues 354–378 (QKAP…TMTR), 453–467 (LPTS…TSET), and 474–491 (NSES…NNLE). ANK repeat units follow at residues 585–617 (EGIT…AQDS) and 618–652 (DGWT…TLSD). The SH3 domain maps to 684 to 746 (INTGKVYAAY…PRTYLALYPS (63 aa)).

It belongs to the iASPP family. As to quaternary structure, interacts with cep-1/p53; the interaction inhibits pro-apoptotic activity of cep-1.

The protein resides in the nucleus. In terms of biological role, negetively regulates apoptosis via its interaction with cep-1. In Caenorhabditis elegans, this protein is Apoptotic enhancer 1 protein.